The primary structure comprises 205 residues: Ephrin-A1 (205 aa).

Positions 1 to 18 (MEFLWAPLLGLCCSLAAA) are cleaved as a signal peptide. The 133-residue stretch at 19 to 151 (DRHTVFWNSS…RLKVTVSGKI (133 aa)) folds into the Ephrin RBD domain. Residue Asn-26 is glycosylated (N-linked (GlcNAc...) asparagine). 2 disulfides stabilise this stretch: Cys-51–Cys-92 and Cys-80–Cys-140. Ser-182 carries the GPI-anchor amidated serine lipid modification. The propeptide at 183–205 (AAPRLFPLAWTVLLLPLLLLQTP) is removed in mature form.

Belongs to the ephrin family. In terms of assembly, monomer. Homodimer. Forms heterodimers with EPHA2. Binds to the receptor tyrosine kinases EPHA2, EPHA3, EPHA4, EPHA5, EPHA6 and EPHA7. Also binds with low affinity to EPHA1. Post-translationally, undergoes proteolysis by a metalloprotease to give rise to a soluble monomeric form. In terms of processing, N-Glycosylation is required for binding to EPHA2 receptor and inducing its internalization. In terms of tissue distribution, brain. Down-regulated in primary glioma tissues compared to the normal tissues. The soluble monomeric form is expressed in the glioblastoma multiforme (GBM) and breast cancer cells (at protein level).

It is found in the cell membrane. It localises to the secreted. In terms of biological role, cell surface GPI-bound ligand for Eph receptors, a family of receptor tyrosine kinases which are crucial for migration, repulsion and adhesion during neuronal, vascular and epithelial development. Binds promiscuously Eph receptors residing on adjacent cells, leading to contact-dependent bidirectional signaling into neighboring cells. Plays an important role in angiogenesis and tumor neovascularization. The recruitment of VAV2, VAV3 and PI3-kinase p85 subunit by phosphorylated EPHA2 is critical for EFNA1-induced RAC1 GTPase activation and vascular endothelial cell migration and assembly. Exerts anti-oncogenic effects in tumor cells through activation and down-regulation of EPHA2. Activates EPHA2 by inducing tyrosine phosphorylation which leads to its internalization and degradation. Acts as a negative regulator in the tumorigenesis of gliomas by down-regulating EPHA2 and FAK. Can evoke collapse of embryonic neuronal growth cone and regulates dendritic spine morphogenesis. This is Ephrin-A1 (EFNA1) from Homo sapiens (Human).